Reading from the N-terminus, the 485-residue chain is Signal recognition particle protein (485 aa).

GTP is bound by residues Gly107–Thr114, Asp189–Arg193, and Thr247–Asp250. Residues Gly452–Leu485 form a disordered region. The span at Lys471–Leu485 shows a compositional bias: basic residues.

The protein belongs to the GTP-binding SRP family. SRP54 subfamily. As to quaternary structure, part of the signal recognition particle protein translocation system, which is composed of SRP and FtsY.

The protein localises to the cytoplasm. It carries out the reaction GTP + H2O = GDP + phosphate + H(+). Its function is as follows. Involved in targeting and insertion of nascent membrane proteins into the cytoplasmic membrane. Binds to the hydrophobic signal sequence of the ribosome-nascent chain (RNC) as it emerges from the ribosomes. The SRP-RNC complex is then targeted to the cytoplasmic membrane where it interacts with the SRP receptor FtsY. This Synechococcus elongatus (strain ATCC 33912 / PCC 7942 / FACHB-805) (Anacystis nidulans R2) protein is Signal recognition particle protein.